We begin with the raw amino-acid sequence, 174 residues long: Ribosome maturation factor RimM (174 aa).

One can recognise a PRC barrel domain in the interval 98-171; that stretch reads EDEFYFHEII…KIKIHVMEGL (74 aa).

Belongs to the RimM family. In terms of assembly, binds ribosomal protein uS19.

The protein localises to the cytoplasm. In terms of biological role, an accessory protein needed during the final step in the assembly of 30S ribosomal subunit, possibly for assembly of the head region. Essential for efficient processing of 16S rRNA. May be needed both before and after RbfA during the maturation of 16S rRNA. It has affinity for free ribosomal 30S subunits but not for 70S ribosomes. The protein is Ribosome maturation factor RimM of Bacillus velezensis (strain DSM 23117 / BGSC 10A6 / LMG 26770 / FZB42) (Bacillus amyloliquefaciens subsp. plantarum).